The following is a 358-amino-acid chain: UDP-N-acetylglucosamine--N-acetylmuramyl-(pentapeptide) pyrophosphoryl-undecaprenol N-acetylglucosamine transferase (358 aa).

UDP-N-acetyl-alpha-D-glucosamine-binding positions include Thr13–Gly15, Asn125, Arg162, Ser190, Ile244, Ala263–Glu268, and Gln289.

Belongs to the glycosyltransferase 28 family. MurG subfamily.

The protein localises to the cell inner membrane. The enzyme catalyses di-trans,octa-cis-undecaprenyl diphospho-N-acetyl-alpha-D-muramoyl-L-alanyl-D-glutamyl-meso-2,6-diaminopimeloyl-D-alanyl-D-alanine + UDP-N-acetyl-alpha-D-glucosamine = di-trans,octa-cis-undecaprenyl diphospho-[N-acetyl-alpha-D-glucosaminyl-(1-&gt;4)]-N-acetyl-alpha-D-muramoyl-L-alanyl-D-glutamyl-meso-2,6-diaminopimeloyl-D-alanyl-D-alanine + UDP + H(+). It participates in cell wall biogenesis; peptidoglycan biosynthesis. In terms of biological role, cell wall formation. Catalyzes the transfer of a GlcNAc subunit on undecaprenyl-pyrophosphoryl-MurNAc-pentapeptide (lipid intermediate I) to form undecaprenyl-pyrophosphoryl-MurNAc-(pentapeptide)GlcNAc (lipid intermediate II). This chain is UDP-N-acetylglucosamine--N-acetylmuramyl-(pentapeptide) pyrophosphoryl-undecaprenol N-acetylglucosamine transferase, found in Halorhodospira halophila (strain DSM 244 / SL1) (Ectothiorhodospira halophila (strain DSM 244 / SL1)).